The sequence spans 21 residues: Japonicin-2 (21 aa).

Cys14 and Cys21 are oxidised to a cystine.

Expressed by the skin glands.

It localises to the secreted. Its function is as follows. Antibacterial activity against the Gram-negative bacterium E.coli and the Gram-positive bacterium S.aureus. This chain is Japonicin-2, found in Rana japonica (Japanese reddish frog).